The primary structure comprises 77 residues: Large ribosomal subunit protein bL31 (77 aa).

This sequence belongs to the bacterial ribosomal protein bL31 family. Type A subfamily. Part of the 50S ribosomal subunit.

Its function is as follows. Binds the 23S rRNA. This is Large ribosomal subunit protein bL31 from Synechococcus elongatus (strain ATCC 33912 / PCC 7942 / FACHB-805) (Anacystis nidulans R2).